Here is a 626-residue protein sequence, read N- to C-terminus: Elongation factor 4 (626 aa).

Residues Ser-14–His-195 enclose the tr-type G domain. GTP contacts are provided by residues Asp-26–Thr-31 and Asn-142–Asp-145. The interval Leu-603 to Gly-626 is disordered. Basic and acidic residues predominate over residues Ser-609 to Gly-626.

It belongs to the TRAFAC class translation factor GTPase superfamily. Classic translation factor GTPase family. LepA subfamily.

It localises to the cell membrane. The catalysed reaction is GTP + H2O = GDP + phosphate + H(+). Required for accurate and efficient protein synthesis under certain stress conditions. May act as a fidelity factor of the translation reaction, by catalyzing a one-codon backward translocation of tRNAs on improperly translocated ribosomes. Back-translocation proceeds from a post-translocation (POST) complex to a pre-translocation (PRE) complex, thus giving elongation factor G a second chance to translocate the tRNAs correctly. Binds to ribosomes in a GTP-dependent manner. The polypeptide is Elongation factor 4 (Bifidobacterium longum subsp. infantis (strain ATCC 15697 / DSM 20088 / JCM 1222 / NCTC 11817 / S12)).